The chain runs to 262 residues: Nitrilase (262 aa).

The CN hydrolase domain maps to 2-237; it reads VKVAYVQMNP…EEVGVAEIDL (236 aa). Glu42 (proton acceptor) is an active-site residue. The active-site Proton donor is the Lys113. The active-site Nucleophile is the Cys146. 173–174 lines the substrate pocket; that stretch reads VM.

Belongs to the carbon-nitrogen hydrolase superfamily. Homodimer.

It carries out the reaction a nitrile + 2 H2O = a carboxylate + NH4(+). Enzymatic activity is inhibited in the presence of acetone, methanol and metal ions such as Ag(2+) and Hg(2+). Is also inhibited by various thiol reagents such as DTNB, p-chloromercuribenzoate, p-hydroxymercuribenzoate, iodacetamide and iodacetate. EDTA has no influence on activity. Functionally, nitrilase that hydrolyzes preferentially aliphatic nitriles like malononitrile and fumaronitrile in vitro. These dinitriles are converted to the corresponding monoacid mononitriles, showing the enzyme is regioselective. Cannot hydrolyze compounds with a nitrile group bound to an aromatic ring or amino acid. Its biological role is unknown. The chain is Nitrilase from Pyrococcus abyssi (strain GE5 / Orsay).